The chain runs to 341 residues: Methionine import ATP-binding protein MetN 3 (341 aa).

One can recognise an ABC transporter domain in the interval 2–241 (ILLENVKKIY…PQQDITKRFV (240 aa)). 38–45 (GYSGAGKS) lines the ATP pocket.

This sequence belongs to the ABC transporter superfamily. Methionine importer (TC 3.A.1.24) family. As to quaternary structure, the complex is composed of two ATP-binding proteins (MetN), two transmembrane proteins (MetI) and a solute-binding protein (MetQ).

The protein localises to the cell membrane. The catalysed reaction is L-methionine(out) + ATP + H2O = L-methionine(in) + ADP + phosphate + H(+). It catalyses the reaction D-methionine(out) + ATP + H2O = D-methionine(in) + ADP + phosphate + H(+). Functionally, part of the ABC transporter complex MetNIQ involved in methionine import. Responsible for energy coupling to the transport system. This is Methionine import ATP-binding protein MetN 3 from Bacillus cereus (strain ATCC 10987 / NRS 248).